A 1104-amino-acid chain; its full sequence is General transcription factor II-I repeat domain-containing protein 1 (1104 aa).

Glycyl lysine isopeptide (Lys-Gly) (interchain with G-Cter in SUMO2) cross-links involve residues lysine 27, lysine 184, lysine 212, lysine 225, lysine 238, lysine 271, lysine 337, lysine 436, lysine 439, and lysine 443. One copy of the GTF2I-like 1 repeat lies at 119-213; that stretch reads LEQCSDVYLL…PDDGGQDTKA (95 aa). The stretch at 342 to 436 is one GTF2I-like 2 repeat; sequence IKEMEDINTL…FDERIFTGNK (95 aa). A Phosphoserine modification is found at serine 448. The tract at residues 509–559 is disordered; it reads SDPSPTSEEMTDSLPGHLPSEDSGYGMEMPADKGPSEEPWSEERPAEESPG. Residues 538–555 are compositionally biased toward basic and acidic residues; that stretch reads PADKGPSEEPWSEERPAE. Residues 556-650 form a GTF2I-like 3 repeat; that stretch reads ESPGDVIRPL…ELLTDGVKEP (95 aa). Glycyl lysine isopeptide (Lys-Gly) (interchain with G-Cter in SUMO2) cross-links involve residues lysine 567, lysine 579, lysine 588, lysine 622, lysine 638, lysine 669, lysine 709, lysine 717, lysine 757, lysine 759, and lysine 772. A GTF2I-like 4 repeat occupies 681–775; it reads LSRIDIANTL…FQGLIPKPET (95 aa). The tract at residues 783-802 is disordered; sequence EAGKTTRPRRLQQDTWQPDE. The GTF2I-like 5 repeat unit spans residues 805 to 899; sequence ANRLGEKVIL…LQPFAEVCND (95 aa). Glycyl lysine isopeptide (Lys-Gly) (interchain with G-Cter in SUMO2) cross-links involve residues lysine 841 and lysine 901. The stretch at 908-1002 is one GTF2I-like 6 repeat; the sequence is SNKLGKKVIL…LQPFGDVCNN (95 aa). 2 disordered regions span residues 1001-1044 and 1058-1104; these read NNAK…VAST and LHPN…LPTR. Positions 1012-1019 match the Nuclear localization signal motif; it reads PKRKRKRV. A compositionally biased stretch (low complexity) spans 1021–1043; that stretch reads EGNSVSSSSSSSSSSSNPESVAS.

This sequence belongs to the TFII-I family. In terms of assembly, interacts with the retinoblastoma protein (RB1) via its C-terminus. In terms of tissue distribution, widely expressed.

Its subcellular location is the nucleus. May be a transcription regulator involved in cell-cycle progression and skeletal muscle differentiation. May repress GTF2I transcriptional functions, by preventing its nuclear residency, or by inhibiting its transcriptional activation. May contribute to slow-twitch fiber type specificity during myogenesis and in regenerating muscles. Binds troponin I slow-muscle fiber enhancer (USE B1). Binds specifically and with high affinity to the EFG sequences derived from the early enhancer of HOXC8. The protein is General transcription factor II-I repeat domain-containing protein 1 (Gtf2ird1) of Mus musculus (Mouse).